The chain runs to 104 residues: Vesicle-associated membrane protein 3 (104 aa).

A disordered region spans residues 1 to 23 (MTTNAPAGSSAAAGSSRRLQQTQ). Over 1–81 (MTTNAPAGSS…KRKYWWKNCK (81 aa)) the chain is Cytoplasmic. Positions 7 to 16 (AGSSAAAGSS) are enriched in low complexity. The 61-residue stretch at 18–78 (RLQQTQNQVD…AKLKRKYWWK (61 aa)) folds into the v-SNARE coiled-coil homology domain. Glycyl lysine isopeptide (Lys-Gly) (interchain with G-Cter in ubiquitin) cross-links involve residues K70, K72, and K81. The helical; Anchor for type IV membrane protein transmembrane segment at 82-102 (MWAIGITVVVIIIIIIVVWSI) threads the bilayer. Residues 103–104 (SS) lie on the Vesicular side of the membrane.

Belongs to the synaptobrevin family. Interacts with POPDC1 (via the C-terminus cytoplasmic tail). Interacts with BCAP31; involved in VAMP3 export from the endoplasmic reticulum. Interacts with BAIAP3; this interaction is increased in the presence of calcium. Interacts with PICALM. Ubiquitinated by RNF167 at Lys-70, Lys-72 and Lys-81, regulating the recycling endosome pathway.

Its subcellular location is the early endosome membrane. It localises to the recycling endosome membrane. The protein localises to the synapse. The protein resides in the synaptosome. Functionally, SNARE involved in vesicular transport from the late endosomes to the trans-Golgi network. The chain is Vesicle-associated membrane protein 3 (VAMP3) from Bos taurus (Bovine).